The sequence spans 299 residues: Acidic endochitinase Pun g 14, amyloplastic (299 aa).

The transit peptide at 1 to 26 (MAKTLPFSRALLLSLSILLVARAISA) directs the protein to the amyloplast. In terms of domain architecture, GH18 spans 27–299 (GDIAIYWGQN…TYSTTIKDQV (273 aa)). Disulfide bonds link cysteine 46–cysteine 93 and cysteine 76–cysteine 83. The active-site Proton donor is the glutamate 153. Residues cysteine 185 and cysteine 216 are joined by a disulfide bond.

The protein belongs to the glycosyl hydrolase 18 family. Chitinase class III subfamily. In terms of assembly, monomer. Highly expressed in seeds and to a lesser extent in the skin of the pomegranate fruit (at protein level). Not expressed in leaves or flesh of the fruit (at protein level).

It localises to the plastid. Its subcellular location is the amyloplast. The enzyme catalyses Random endo-hydrolysis of N-acetyl-beta-D-glucosaminide (1-&gt;4)-beta-linkages in chitin and chitodextrins.. Activity is not affected by addition of 10 mM Ca(2+) or removal of Ca(2+). Functionally, hydrolyzes chitin. Probable calcium storage protein of the seeds. Binds calcium ions with high capacity and low affinity. Involved in seed germination. The sequence is that of Acidic endochitinase Pun g 14, amyloplastic from Punica granatum (Pomegranate).